A 133-amino-acid polypeptide reads, in one-letter code: Pilotin OutS (133 aa).

The signal sequence occupies residues 1–20 (MHVSSLKVVLFGVCCLSLAA). Cys21 carries the N-palmitoyl cysteine lipid modification. Cys21 carries S-diacylglycerol cysteine lipidation. A disulfide bond links Cys61 and Cys115.

The protein to K.pneumoniae PulS. As to quaternary structure, interacts with secretin OutD.

It localises to the cell outer membrane. Out proteins are required for the translocation of pectate lyases and cellulases across the outer membrane. The protein is Pilotin OutS (outS) of Dickeya dadantii (strain 3937) (Erwinia chrysanthemi (strain 3937)).